The following is a 722-amino-acid chain: Solute carrier organic anion transporter family member 4A1 (722 aa).

The segment at 1-52 is disordered; the sequence is MPLHQLGDKPLTFPSPNSAMENGLDHTPPSRRASPGTPLSPGSLRSAAHSPL. Residues 1–103 lie on the Cytoplasmic side of the membrane; that stretch reads MPLHQLGDKP…PCLQVLNTPK (103 aa). Ser-34 carries the post-translational modification Phosphoserine. Thr-37 bears the Phosphothreonine mark. Phosphoserine occurs at positions 40, 43, 46, and 50. A helical membrane pass occupies residues 104–124; that stretch reads GILFFLCAAAFLQGMTVNGFI. At 125-143 the chain is on the extracellular side; the sequence is NTVITSLERRYDLHSYQSG. A helical transmembrane segment spans residues 144 to 164; the sequence is LIASSYDIAACLCLTFVSYFG. The Cytoplasmic portion of the chain corresponds to 165 to 170; it reads GSGHKP. The chain crosses the membrane as a helical span at residues 171 to 195; that stretch reads RWLGWGVLLMGTGSLVFALPHFTAG. Residues 196–222 lie on the Extracellular side of the membrane; it reads RYEVELDAGVRTCPANPGAVCADSTSG. Residues 223 to 253 form a helical membrane-spanning segment; that stretch reads LSRYQLVFMLGQFLHGVGATPLYTLGVTYLD. The Cytoplasmic portion of the chain corresponds to 254 to 272; that stretch reads ENVKSSCSPVYIAIFYTAA. The chain crosses the membrane as a helical span at residues 273–293; sequence ILGPAAGYLIGGALLNIYTEM. At 294–307 the chain is on the extracellular side; it reads GRRTELTTESPLWV. A helical membrane pass occupies residues 308-332; the sequence is GAWWVGFLGSGAAAFFTAVPILGYP. The Cytoplasmic portion of the chain corresponds to 333 to 378; that stretch reads RQLPGSQRYAVMRAAEMHQLKDSSRGEASNPDFGKTIRDLPLSIWL. Residues 379-400 traverse the membrane as a helical segment; sequence LLKNPTFILLCLAGATEATLIT. Topologically, residues 401–420 are extracellular; the sequence is GMSTFSPKFLESQFSLSASE. A helical membrane pass occupies residues 421–444; the sequence is AATLFGYLVVPAGGGGTFLGGFFV. Over 445-448 the chain is Cytoplasmic; that stretch reads NKLR. The helical transmembrane segment at 449–471 threads the bilayer; the sequence is LRGSAVIKFCLFCTVVSLLGILV. Residues 472 to 580 are Extracellular-facing; it reads FSLHCPSVPM…TSTCQRKPLL (109 aa). A Kazal-like domain is found at 498-555; the sequence is LNLTAPCNAACSCQPEHYSPVCGSDGLMYFSLCHAGCPAATETNVDGQKVYRDCSCIP. Asn-499 carries an N-linked (GlcNAc...) asparagine glycan. Intrachain disulfides connect Cys-504–Cys-534, Cys-510–Cys-530, and Cys-519–Cys-553. N-linked (GlcNAc...) asparagine glycosylation occurs at Asn-557. A helical membrane pass occupies residues 581-603; the sequence is LVFIFVVIFFTFLSSIPALTATL. The Cytoplasmic segment spans residues 604 to 612; that stretch reads RCVRDPQRS. A helical membrane pass occupies residues 613-638; the sequence is FALGIQWIVVRILGGIPGPIAFGWVI. Residues 639-671 are Extracellular-facing; sequence DKACLLWQDQCGQQGSCLVYQNSAMSRYILIMG. A helical transmembrane segment spans residues 672–689; that stretch reads LLYKVLGVLFFAIACFLY. The Cytoplasmic segment spans residues 690-722; that stretch reads KPLSESSDGLETCLPSQSSAPDSATDSQLQSSV. A disordered region spans residues 703-722; that stretch reads LPSQSSAPDSATDSQLQSSV.

Belongs to the organo anion transporter (TC 2.A.60) family. In terms of tissue distribution, widely expressed. Expressed in placental trophoblasts. Expressed in pancreas, kidney, skeletal muscle, liver, lung, brain, heart, colon, small intestine, ovary, testis, prostate, thymus and spleen. In testis, primarily localized to Leydig cells.

It localises to the cell membrane. The catalysed reaction is 3,3',5-triiodo-L-thyronine(out) + L-glutamate(in) = 3,3',5-triiodo-L-thyronine(in) + L-glutamate(out). The enzyme catalyses L-thyroxine(out) + L-glutamate(in) = L-thyroxine(in) + L-glutamate(out). It carries out the reaction estrone 3-sulfate(out) + L-glutamate(in) = estrone 3-sulfate(in) + L-glutamate(out). It catalyses the reaction taurocholate(out) + L-glutamate(in) = taurocholate(in) + L-glutamate(out). The catalysed reaction is 3,3',5-triiodo-L-thyronine(out) = 3,3',5-triiodo-L-thyronine(in). The enzyme catalyses L-thyroxine(out) = L-thyroxine(in). It carries out the reaction 3,3',5'-triiodo-L-thyronine(out) = 3,3',5'-triiodo-L-thyronine(in). It catalyses the reaction estrone 3-sulfate(out) = estrone 3-sulfate(in). The catalysed reaction is 17beta-estradiol 17-O-(beta-D-glucuronate)(out) = 17beta-estradiol 17-O-(beta-D-glucuronate)(in). The enzyme catalyses taurocholate(out) = taurocholate(in). It carries out the reaction prostaglandin E2(out) = prostaglandin E2(in). Organic anion antiporter with apparent broad substrate specificity. Recognizes various substrates including thyroid hormones 3,3',5-triiodo-L-thyronine (T3), L-thyroxine (T4) and 3,3',5'-triiodo-L-thyronine (rT3), conjugated steroids such as estrone 3-sulfate and estradiol 17-beta glucuronide, bile acids such as taurocholate and prostanoids such as prostaglandin E2, likely operating in a tissue-specific manner. May be involved in uptake of metabolites from the circulation into organs such as kidney, liver or placenta. Possibly drives the selective transport of thyroid hormones and estrogens coupled to an outward glutamate gradient across the microvillous membrane of the placenta. The transport mechanism, its electrogenicity and potential tissue-specific counterions remain to be elucidated. This chain is Solute carrier organic anion transporter family member 4A1 (SLCO4A1), found in Homo sapiens (Human).